The following is a 128-amino-acid chain: DELTA-urthionin-Uf1a (128 aa).

The signal sequence occupies residues 1-24 (MEGKTVIVSLLLLSIVVGQIQVEA). Intrachain disulfides connect Cys27/Cys64, Cys28/Cys56, and Cys40/Cys50. Residues 67 to 128 (LSIPEVTGEA…LCTKNSIETA (62 aa)) constitute a propeptide, acidic domain.

It belongs to the plant thionin (TC 1.C.44) family. As to expression, expressed in trichomes, that are stiff epidermal hairs located on the surface of petioles and leaves.

The protein localises to the secreted. Its function is as follows. Plant defense protein that causes pain by probable disruption of cell membranes. Shows cytotoxic activity against the neuroblastoma cell line SH-SY5Y and slightly weaker activity against several non-neuronal cell lines. In vivo, intraplantar injection into mice causes several nocifensive responses, along with swelling and redness. The sequence is that of DELTA-urthionin-Uf1a from Urtica ferox (Tree nettle).